Reading from the N-terminus, the 861-residue chain is Translation initiation factor IF-2 (861 aa).

Residues Ala107–Gln272 form a disordered region. Residues Arg115–Glu128 are compositionally biased toward basic and acidic residues. Polar residues-rich tracts occupy residues Ser148 to Thr158 and Val169 to Gly180. Basic and acidic residues predominate over residues Asn210–Arg228. Over residues Arg260–Lys269 the composition is skewed to basic residues. The 170-residue stretch at Ser362 to Thr531 folds into the tr-type G domain. Positions Gly371–Thr378 are G1. Gly371–Thr378 contacts GTP. The tract at residues Gly396–His400 is G2. A G3 region spans residues Asp417–Gly420. Residues Asp417–His421 and Asn471–Asp474 each bind GTP. The G4 stretch occupies residues Asn471–Asp474. The interval Ser507–His509 is G5.

The protein belongs to the TRAFAC class translation factor GTPase superfamily. Classic translation factor GTPase family. IF-2 subfamily.

The protein resides in the cytoplasm. Its function is as follows. One of the essential components for the initiation of protein synthesis. Protects formylmethionyl-tRNA from spontaneous hydrolysis and promotes its binding to the 30S ribosomal subunits. Also involved in the hydrolysis of GTP during the formation of the 70S ribosomal complex. This chain is Translation initiation factor IF-2, found in Hahella chejuensis (strain KCTC 2396).